Here is a 162-residue protein sequence, read N- to C-terminus: MEAIKDFFGSLMLREMLKGMALTGRYMFSRKITVQFPEEKTPQSPRFRGLHALRRYPNGEERCIACKLCEAVCPAMAITIESEQRDDGSRRTTRYDIDLTKCIFCGFCEESCPVDSIVETHIFEYHGEKRGDLYYTKEMLLAVGDRYETEIAAARTADAAYR.

2 4Fe-4S ferredoxin-type domains span residues 53–83 (LRRYPNGEERCIACKLCEAVCPAMAITIESE) and 93–122 (TRYDIDLTKCIFCGFCEESCPVDSIVETHI). Residues Cys63, Cys66, Cys69, Cys73, Cys102, Cys105, Cys108, and Cys112 each contribute to the [4Fe-4S] cluster site.

This sequence belongs to the complex I 23 kDa subunit family. In terms of assembly, NDH-1 is composed of 14 different subunits. Subunits NuoA, H, J, K, L, M, N constitute the membrane sector of the complex. It depends on [4Fe-4S] cluster as a cofactor.

It localises to the cell inner membrane. It catalyses the reaction a quinone + NADH + 5 H(+)(in) = a quinol + NAD(+) + 4 H(+)(out). Its function is as follows. NDH-1 shuttles electrons from NADH, via FMN and iron-sulfur (Fe-S) centers, to quinones in the respiratory chain. The immediate electron acceptor for the enzyme in this species is believed to be ubiquinone. Couples the redox reaction to proton translocation (for every two electrons transferred, four hydrogen ions are translocated across the cytoplasmic membrane), and thus conserves the redox energy in a proton gradient. The sequence is that of NADH-quinone oxidoreductase subunit I from Herminiimonas arsenicoxydans.